A 283-amino-acid chain; its full sequence is Urease accessory protein UreD 1 (283 aa).

The protein belongs to the UreD family. In terms of assembly, ureD, UreF and UreG form a complex that acts as a GTP-hydrolysis-dependent molecular chaperone, activating the urease apoprotein by helping to assemble the nickel containing metallocenter of UreC. The UreE protein probably delivers the nickel.

Its subcellular location is the cytoplasm. Its function is as follows. Required for maturation of urease via the functional incorporation of the urease nickel metallocenter. In Brucella anthropi (strain ATCC 49188 / DSM 6882 / CCUG 24695 / JCM 21032 / LMG 3331 / NBRC 15819 / NCTC 12168 / Alc 37) (Ochrobactrum anthropi), this protein is Urease accessory protein UreD 1.